The sequence spans 340 residues: Phosphoribosylformylglycinamidine cyclo-ligase (340 aa).

Belongs to the AIR synthase family.

It localises to the cytoplasm. The catalysed reaction is 2-formamido-N(1)-(5-O-phospho-beta-D-ribosyl)acetamidine + ATP = 5-amino-1-(5-phospho-beta-D-ribosyl)imidazole + ADP + phosphate + H(+). The protein operates within purine metabolism; IMP biosynthesis via de novo pathway; 5-amino-1-(5-phospho-D-ribosyl)imidazole from N(2)-formyl-N(1)-(5-phospho-D-ribosyl)glycinamide: step 2/2. The polypeptide is Phosphoribosylformylglycinamidine cyclo-ligase (Streptococcus pyogenes serotype M18 (strain MGAS8232)).